We begin with the raw amino-acid sequence, 545 residues long: Carboxylesterase 5A (545 aa).

The N-terminal stretch at 1 to 28 is a signal peptide; that stretch reads MSGMWVHPGRTLIWALWVLAAVIKGPAA. Asn86 carries an N-linked (GlcNAc...) (complex) asparagine glycan. A disulfide bond links Cys94 and Cys121. Asn134 carries N-linked (GlcNAc...) asparagine glycosylation. Residue Ser226 is the Acyl-ester intermediate of the active site. An intrachain disulfide couples Cys281 to Cys292. Residue Glu346 is the Charge relay system of the active site. Residues Asn363 and Asn443 are each glycosylated (N-linked (GlcNAc...) asparagine). The Charge relay system role is filled by His454.

The protein belongs to the type-B carboxylesterase/lipase family. Post-translationally, N-glycosylated; contains a fucosylated complex carbohydrate. As to expression, present at high level in urine. Expressed in the kidney proximal straight tubular cells and is secreted from the apical compartment of the cells into the urine (at protein level). In mature cats, it is present at higher level in intact males than in castrated males or in intact or spayed females.

It is found in the secreted. The catalysed reaction is a carboxylic ester + H2O = an alcohol + a carboxylate + H(+). Its function is as follows. Carboxylesterase present at high level in urine that regulates production of felinine, a probable pheromone precursor. Probably acts by hydrolyzing the peptide bond of the felinine precursor 3-methylbutanol cyteinylglycine, producing felinine and glycine in cat urine. In Felis catus (Cat), this protein is Carboxylesterase 5A (CES5A).